We begin with the raw amino-acid sequence, 389 residues long: Putative cyclin-F3-1 (389 aa).

Residues 1–103 form a disordered region; the sequence is MEAAAAAAAE…GAAGGSRQPV (103 aa). Residues 19–43 are compositionally biased toward low complexity; it reads VEGAAVAAVAPEAAAEGPSEPNAGE.

Belongs to the cyclin family. Cyclin F subfamily.

This is Putative cyclin-F3-1 (CYCF3-1) from Oryza sativa subsp. japonica (Rice).